A 323-amino-acid chain; its full sequence is Elongation factor P--(R)-beta-lysine ligase (323 aa).

A substrate-binding site is contributed by 74-76 (SPE). Residues 98–100 (RNE) and Asn-107 each bind ATP. Tyr-116 is a substrate binding site. 242–243 (EL) contributes to the ATP binding site. Glu-249 contacts substrate. Gly-298 is a binding site for ATP.

The protein belongs to the class-II aminoacyl-tRNA synthetase family. EpmA subfamily. As to quaternary structure, homodimer.

It carries out the reaction D-beta-lysine + L-lysyl-[protein] + ATP = N(6)-((3R)-3,6-diaminohexanoyl)-L-lysyl-[protein] + AMP + diphosphate + H(+). In terms of biological role, with EpmB is involved in the beta-lysylation step of the post-translational modification of translation elongation factor P (EF-P). Catalyzes the ATP-dependent activation of (R)-beta-lysine produced by EpmB, forming a lysyl-adenylate, from which the beta-lysyl moiety is then transferred to the epsilon-amino group of a conserved specific lysine residue in EF-P. The protein is Elongation factor P--(R)-beta-lysine ligase of Vibrio vulnificus (strain YJ016).